Reading from the N-terminus, the 1192-residue chain is Protein argonaute 13 (1192 aa).

Residues 183 to 296 (TVIQFVEEFL…LPMEVCKIVE (114 aa)) enclose the PAZ domain. The Piwi domain maps to 472–770 (LLIVILLEVS…AASHAHCCIK (299 aa)).

Belongs to the argonaute family. Ago subfamily.

Functionally, probably involved in the RNA silencing pathway. May bind to short RNAs such as microRNAs (miRNAs) or short interfering RNAs (siRNAs), and represses the translation of mRNAs which are complementary to them. The sequence is that of Protein argonaute 13 (AGO13) from Oryza sativa subsp. japonica (Rice).